The primary structure comprises 461 residues: Cysteine--tRNA ligase (461 aa).

C28 serves as a coordination point for Zn(2+). Positions 30–40 match the 'HIGH' region motif; the sequence is ITIYDLCHIGH. C209, H234, and E238 together coordinate Zn(2+). A 'KMSKS' region motif is present at residues 266 to 270; it reads KMSKS. K269 contacts ATP.

Belongs to the class-I aminoacyl-tRNA synthetase family. In terms of assembly, monomer. Requires Zn(2+) as cofactor.

Its subcellular location is the cytoplasm. It catalyses the reaction tRNA(Cys) + L-cysteine + ATP = L-cysteinyl-tRNA(Cys) + AMP + diphosphate. The protein is Cysteine--tRNA ligase of Photorhabdus laumondii subsp. laumondii (strain DSM 15139 / CIP 105565 / TT01) (Photorhabdus luminescens subsp. laumondii).